The primary structure comprises 452 residues: Cell division protein FtsZ (452 aa).

GTP-binding positions include 24-28 (GAGSN), 111-113 (GTG), Glu-142, Arg-146, and Asp-190.

Belongs to the FtsZ family. In terms of assembly, homodimer. Polymerizes to form a dynamic ring structure in a strictly GTP-dependent manner. Interacts directly with several other division proteins.

It is found in the cytoplasm. Its function is as follows. Essential cell division protein that forms a contractile ring structure (Z ring) at the future cell division site. The regulation of the ring assembly controls the timing and the location of cell division. One of the functions of the FtsZ ring is to recruit other cell division proteins to the septum to produce a new cell wall between the dividing cells. Binds GTP and shows GTPase activity. This Rickettsia prowazekii (strain Madrid E) protein is Cell division protein FtsZ.